The sequence spans 526 residues: MDNESQYSGYSYKSSHSRSSRKHRDRRDRHRSKSRDSSSRGDKSVTIQAPGEPLLDAESTRGDDRDDNWGETTTVVTGTSEHSVSNEDLTRASKELEDSSPLECRRFAGPIVSGVLGLFALLTPLAFLLLPQLLWRDSLEPCGTPCEGLYVSLAFKLLVLLISSWALFLRPSRSTLPRFFVFRCLLMALVFLFVASYWLFYGVRVLEPRERDYRGIVGYAVSLVDALLFIQYLALVLLEVRHLRPAFCLKVVRTTDGASRFYNVGHLSIQRAAVWVLDHYYTDFPVYNPALLNLPKSILSKKMSGFKVYSLGEENSTNNSTGQSRAMIAAAARRRDNSHNEYYYEEAEMDRRVRKRKARLVVAVEEAFTHIKRLQDDEAAASPKHPREVMDPREAAQAIFAPMARAMQKYLRTTRQQPYHSMESIISHLQFCITHNMTPKAFLERYLTPGPTMQYQRENGRGRQWTLVSEEPVTAALRQGLVFSLRRLDFALVVTVTPLPFLNLGEEFIDPKSHKFVMRLQSETSV.

Residues 1–95 (MDNESQYSGY…NEDLTRASKE (95 aa)) form a disordered region. Over 1–109 (MDNESQYSGY…SPLECRRFAG (109 aa)) the chain is Cytoplasmic. The span at 15–33 (SHSRSSRKHRDRRDRHRSK) shows a compositional bias: basic residues. Basic and acidic residues-rich tracts occupy residues 34-43 (SRDSSSRGDK) and 58-68 (ESTRGDDRDDN). Residues 70–83 (GETTTVVTGTSEHS) are compositionally biased toward low complexity. The span at 84 to 95 (VSNEDLTRASKE) shows a compositional bias: basic and acidic residues. Residues 110–130 (PIVSGVLGLFALLTPLAFLLL) form a helical membrane-spanning segment. Residues 131 to 148 (PQLLWRDSLEPCGTPCEG) lie on the Extracellular side of the membrane. The chain crosses the membrane as a helical span at residues 149–169 (LYVSLAFKLLVLLISSWALFL). Residues 170-178 (RPSRSTLPR) lie on the Cytoplasmic side of the membrane. Residues 179–199 (FFVFRCLLMALVFLFVASYWL) form a helical membrane-spanning segment. The Extracellular portion of the chain corresponds to 200 to 215 (FYGVRVLEPRERDYRG). A helical membrane pass occupies residues 216-236 (IVGYAVSLVDALLFIQYLALV). Over 237–526 (LLEVRHLRPA…VMRLQSETSV (290 aa)) the chain is Cytoplasmic. Residues 523 to 526 (ETSV) carry the PDZ-binding motif.

It belongs to the Vang family. In terms of assembly, interacts with the PDZ domain of dvl2/dsh. As to expression, ubiquitously expressed at the 4-cell stage. In early somitogenesis, becomes more abundant in anterior neural tissue where expression is seen in the neural tube but not in the notochord.

Its subcellular location is the cell membrane. Functionally, plays a role in non-canonical Wnt/planar cell polarity (PCP) signaling to regulate convergent extension cell movements during gastrulation. Acts together with scrib and prickle1 and localizes prickle1 and dvl2/dsh to the plasma membrane. Has an overlapping role with kny during both convergent extension and eye development. In the eye, involved in establishing proper alignment of the anterior neural plate and midline cells expressing shha and shhb/twhh. Has indirect effects on a number of other developmental processes including notochord shape formation, neural progenitor cell morphogenesis, segregation of somites and adaxial cell development. Together with prickle1, required for the posterior (caudal) movement of branchiomotor neurons in the hindbrain independently of, and a few hours after, convergent extension. May be required for cell surface localization of fzd3 and fzd6 in the inner ear. This is Vang-like protein 2 from Danio rerio (Zebrafish).